The sequence spans 330 residues: Phosphate acyltransferase (330 aa).

This sequence belongs to the PlsX family. As to quaternary structure, homodimer. Probably interacts with PlsY.

It is found in the cytoplasm. It carries out the reaction a fatty acyl-[ACP] + phosphate = an acyl phosphate + holo-[ACP]. It participates in lipid metabolism; phospholipid metabolism. Its function is as follows. Catalyzes the reversible formation of acyl-phosphate (acyl-PO(4)) from acyl-[acyl-carrier-protein] (acyl-ACP). This enzyme utilizes acyl-ACP as fatty acyl donor, but not acyl-CoA. The chain is Phosphate acyltransferase from Streptococcus pneumoniae (strain 70585).